The chain runs to 473 residues: Dynein axonemal assembly factor 11 (473 aa).

LRR repeat units lie at residues 22 to 43 (SLEE…DKWC), 45 to 66 (DLKI…SKLK), 67 to 88 (KLEY…EGCE), and 89 to 110 (WLTK…KTLT). One can recognise an LRRCT domain in the interval 123 to 161 (NPCADFDGYRQFVVVTLQQLKWLDGKEIERSERIQALQN). The stretch at 153 to 205 (SERIQALQNYTSVEQQIREQEKAYCLRRAKEKEEAQRKLEEENESEDKKKSST) forms a coiled coil. 2 stretches are compositionally biased toward basic and acidic residues: residues 188–202 (QRKL…DKKK) and 273–283 (EKQRKAQDKLS). 3 disordered regions span residues 188–244 (QRKL…TKES), 273–292 (EKQR…AKPP), and 387–473 (VGEM…PPLI). Residues 305-402 (VNEAKLDFSL…GGQRTPTSVK (98 aa)) enclose the CS domain. Residues 397 to 408 (TPTSVKTTSTSS) are compositionally biased toward low complexity. The span at 417–431 (KQIERLEVDPSKHSC) shows a compositional bias: basic and acidic residues. Over residues 456–467 (PSEEDPDFEDNP) the composition is skewed to acidic residues.

This sequence belongs to the tilB family. As to quaternary structure, interacts (via CS domain) with ZMYND10 (via C-terminus). As to expression, mainly expressed in cells with motile cilia. Expressed in epithelial cells of the trachea, testis and ependymal cells of the cerebral ventricles. In testis, abundant expression in late prophase of meiosis I with a dramatic decrease after the first meiotic division (at protein level).

The protein resides in the cytoplasm. It localises to the cell projection. The protein localises to the cilium. It is found in the dynein axonemal particle. Its subcellular location is the flagellum. In terms of biological role, involved in dynein arm assembly, is important for expression and transporting outer dynein arm (ODA) proteins from the cytoplasm to the cilia. Acts as a crucial component in the formation and motility of spermatozoal flagella. The protein is Dynein axonemal assembly factor 11 (Dnaaf11) of Mus musculus (Mouse).